Reading from the N-terminus, the 75-residue chain is MAQSSRYSNERVEKILAEMVQVLEKNQTPTDLSLMVLGNMVTNLLNTSVAPAQRQAMARSFADALQASVRDDPSH.

It belongs to the UPF0352 family.

This chain is UPF0352 protein ETA_12580, found in Erwinia tasmaniensis (strain DSM 17950 / CFBP 7177 / CIP 109463 / NCPPB 4357 / Et1/99).